Consider the following 496-residue polypeptide: L-arabinose isomerase (496 aa).

Residues glutamate 306, glutamate 331, histidine 348, and histidine 447 each coordinate Mn(2+).

This sequence belongs to the arabinose isomerase family. Homotetramer. Mn(2+) serves as cofactor.

It carries out the reaction beta-L-arabinopyranose = L-ribulose. It functions in the pathway carbohydrate degradation; L-arabinose degradation via L-ribulose; D-xylulose 5-phosphate from L-arabinose (bacterial route): step 1/3. Inhibited by copper. Its function is as follows. Catalyzes the conversion of L-arabinose to L-ribulose. In vitro, converts D-galactose into D-tagatose. This Geobacillus stearothermophilus (Bacillus stearothermophilus) protein is L-arabinose isomerase (araA).